Consider the following 172-residue polypeptide: RNA pyrophosphohydrolase (172 aa).

Positions 6-149 (GFRANVGIII…KRDVYRKVMK (144 aa)) constitute a Nudix hydrolase domain. The Nudix box signature appears at 38–59 (GGLDDGESAEEAMYRELYEEVG).

The protein belongs to the Nudix hydrolase family. RppH subfamily. Requires a divalent metal cation as cofactor.

Functionally, accelerates the degradation of transcripts by removing pyrophosphate from the 5'-end of triphosphorylated RNA, leading to a more labile monophosphorylated state that can stimulate subsequent ribonuclease cleavage. In Shewanella denitrificans (strain OS217 / ATCC BAA-1090 / DSM 15013), this protein is RNA pyrophosphohydrolase.